Reading from the N-terminus, the 66-residue chain is Cold shock protein 1 (66 aa).

In terms of domain architecture, CSD spans 4–63 (GTVKWFNADKGYGFITGEDGNDVFVHFSAIQTDGFKTLEEGQKVTFDEESSDRGPQAANV). The tract at residues 47–66 (VTFDEESSDRGPQAANVVPQ) is disordered.

It localises to the cytoplasm. The protein is Cold shock protein 1 (csp) of Lactiplantibacillus plantarum (strain ATCC BAA-793 / NCIMB 8826 / WCFS1) (Lactobacillus plantarum).